The chain runs to 33 residues: Unknown 31.6 kDa protein from 2D-PAGE (33 aa).

This chain is Unknown 31.6 kDa protein from 2D-PAGE, found in Onion yellows phytoplasma.